A 444-amino-acid polypeptide reads, in one-letter code: Phosphoglucosamine mutase (444 aa).

The Phosphoserine intermediate role is filled by S103. Positions 103, 242, 244, and 246 each coordinate Mg(2+). Phosphoserine is present on S103.

This sequence belongs to the phosphohexose mutase family. Mg(2+) serves as cofactor. In terms of processing, activated by phosphorylation.

It carries out the reaction alpha-D-glucosamine 1-phosphate = D-glucosamine 6-phosphate. Catalyzes the conversion of glucosamine-6-phosphate to glucosamine-1-phosphate. In Hydrogenovibrio crunogenus (strain DSM 25203 / XCL-2) (Thiomicrospira crunogena), this protein is Phosphoglucosamine mutase.